A 638-amino-acid chain; its full sequence is MATAAAASTALTGATTAAPKARRRAHLLATRRALAAPIRCSAASPAMPMAPPATPLRPWGPTDPRKGADILVESLERCGVRDVFAYPGGASMEIHQALTRSPVIANHLFRHEQGEAFAASGYARSSGRVGVCIATSGPGATNLVSALADALLDSVPMVAITGQVPRRMIGTDAFQETPIVEVTRSITKHNYLVLDVDDIPRVVQEAFFLASSGRPGPVLVDIPKDIQQQMAVPVWDKPMSLPGYIARLPKPPATELLEQVLRLVGESRRPVLYVGGGCAASGEELRRFVELTGIPVTTTLMGLGNFPSDDPLSLRMLGMHGTVYANYAVDKADLLLALGVRFDDRVTGKIEAFASRAKIVHVDIDPAEIGKNKQPHVSICADVKLALQGMNALLEGSTSKKSFDFGSWNDELDQQKREFPLGYKTSNEEIQPQYAIQVLDELTKGEAIIGTGVGQHQMWAAQYYTYKRPRQWLSSAGLGAMGFGLPAAAGASVANPGVTVVDIDGDGSFLMNVQELAMIRIENLPVKVFVLNNQHLGMVVQWEDRFYKANRAHTYLGNPENESEIYPDFVTIAKGFNIPAVRVTKKNEVRAAIKKMLETPGPYLLDIIVPHQEHVLPMIPSGGAFKDMILDGDGRTVY.

The span at 1 to 19 (MATAAAASTALTGATTAAP) shows a compositional bias: low complexity. A disordered region spans residues 1–23 (MATAAAASTALTGATTAAPKARR). The N-terminal 39 residues, 1–39 (MATAAAASTALTGATTAAPKARRRAHLLATRRALAAPIR), are a transit peptide targeting the chloroplast. Glu-112 is a binding site for thiamine diphosphate. The cysteines at positions 132 and 278 are disulfide-linked. FAD-binding positions include Arg-214, 320–341 (HGTV…LGVR), and 363–382 (DIDP…ICAD). The tract at residues 455-535 (QHQMWAAQYY…VKVFVLNNQH (81 aa)) is thiamine pyrophosphate binding. Mg(2+) contacts are provided by Asp-506 and Asn-533.

The protein belongs to the TPP enzyme family. Mg(2+) is required as a cofactor. Thiamine diphosphate serves as cofactor.

The protein localises to the plastid. The protein resides in the chloroplast. The catalysed reaction is 2 pyruvate + H(+) = (2S)-2-acetolactate + CO2. The protein operates within amino-acid biosynthesis; L-isoleucine biosynthesis; L-isoleucine from 2-oxobutanoate: step 1/4. Its pathway is amino-acid biosynthesis; L-valine biosynthesis; L-valine from pyruvate: step 1/4. The sequence is that of Acetolactate synthase 1, chloroplastic (ALS1) from Zea mays (Maize).